Reading from the N-terminus, the 884-residue chain is Probable leucine--tRNA ligase, cytoplasmic (884 aa).

The short motif at Pro40 to His50 is the 'HIGH' region element. Positions Lys566–Ser570 match the 'KMSKS' region motif. Lys569 contacts ATP.

The protein belongs to the class-I aminoacyl-tRNA synthetase family.

Its subcellular location is the cytoplasm. The enzyme catalyses tRNA(Leu) + L-leucine + ATP = L-leucyl-tRNA(Leu) + AMP + diphosphate. The chain is Probable leucine--tRNA ligase, cytoplasmic from Vairimorpha ceranae (strain BRL01) (Microsporidian parasite).